A 261-amino-acid chain; its full sequence is Ribosomal RNA small subunit methyltransferase J (261 aa).

S-adenosyl-L-methionine is bound by residues Arg-109–Asp-110, Glu-125–Arg-126, and Asp-179.

Belongs to the methyltransferase superfamily. RsmJ family.

It localises to the cytoplasm. The enzyme catalyses guanosine(1516) in 16S rRNA + S-adenosyl-L-methionine = N(2)-methylguanosine(1516) in 16S rRNA + S-adenosyl-L-homocysteine + H(+). Its function is as follows. Specifically methylates the guanosine in position 1516 of 16S rRNA. The protein is Ribosomal RNA small subunit methyltransferase J of Pseudomonas aeruginosa (strain ATCC 15692 / DSM 22644 / CIP 104116 / JCM 14847 / LMG 12228 / 1C / PRS 101 / PAO1).